A 614-amino-acid polypeptide reads, in one-letter code: Pentatricopeptide repeat-containing protein At1g63080, mitochondrial (614 aa).

The N-terminal 7 residues, 1 to 7 (MSLAKRF), are a transit peptide targeting the mitochondrion. PPR repeat units follow at residues 64 to 98 (SIVE…GVSH), 99 to 133 (NLYT…GYGP), 134 to 168 (SIVT…GYQP), 169 to 203 (DTVT…GCQP), 204 to 238 (DLVT…KIEA), 239 to 273 (DVVI…GIRP), 274 to 308 (DVFT…KINP), 309 to 343 (NVVT…SIDP), 344 to 378 (NIVT…DCLP), 379 to 413 (DVVT…GLVG), 414 to 448 (NTVT…GVHP), 449 to 483 (NIMT…KMEP), 484 to 518 (DIYT…GVKP), 519 to 553 (DVIA…GPLP), and 554 to 588 (DSGT…RFAG).

It belongs to the PPR family. P subfamily.

The protein localises to the mitochondrion. The chain is Pentatricopeptide repeat-containing protein At1g63080, mitochondrial from Arabidopsis thaliana (Mouse-ear cress).